Reading from the N-terminus, the 61-residue chain is MARKALIVKAQRPQKYKVRAYNRCKICGRPRAYMRKFGMCRICFREHALRGLIPGVTKSSW.

Zn(2+)-binding residues include Cys-24, Cys-27, Cys-40, and Cys-43.

Belongs to the universal ribosomal protein uS14 family. Zinc-binding uS14 subfamily. Part of the 30S ribosomal subunit. Contacts proteins S3 and S10. It depends on Zn(2+) as a cofactor.

Its function is as follows. Binds 16S rRNA, required for the assembly of 30S particles and may also be responsible for determining the conformation of the 16S rRNA at the A site. This chain is Small ribosomal subunit protein uS14, found in Roseiflexus sp. (strain RS-1).